Consider the following 248-residue polypeptide: Anamorsin homolog (248 aa).

The N-terminal SAM-like domain stretch occupies residues 4-130 (FKGLQKSLYI…ETGSSARLSF (127 aa)). Residues 131-161 (AKKTSSVNVWKISGDDEELIDEEELLDEEDK) form a linker region. [2Fe-2S] cluster contacts are provided by C172, C181, C184, and C186. A fe-S binding site A region spans residues 172 to 186 (CSTTGKRKACKNCSC). The [4Fe-4S] cluster site is built by C209, C212, C220, and C223. Short sequence motifs (cx2C motif) lie at residues 209–212 (CGNC) and 220–223 (CSTC). The fe-S binding site B stretch occupies residues 209–223 (CGNCYLGDAFRCSTC).

Belongs to the anamorsin family. In terms of assembly, monomer. Requires [2Fe-2S] cluster as cofactor. [4Fe-4S] cluster serves as cofactor.

The protein localises to the cytoplasm. The protein resides in the mitochondrion intermembrane space. Component of the cytosolic iron-sulfur (Fe-S) protein assembly (CIA) machinery. Required for the maturation of extramitochondrial Fe-S proteins. Part of an electron transfer chain functioning in an early step of cytosolic Fe-S biogenesis, facilitating the de novo assembly of a [4Fe-4S] cluster on the cytosolic Fe-S scaffold complex. Electrons are transferred from NADPH via a FAD- and FMN-containing diflavin oxidoreductase. Together with the diflavin oxidoreductase, also required for the assembly of the diferric tyrosyl radical cofactor of ribonucleotide reductase (RNR), probably by providing electrons for reduction during radical cofactor maturation in the catalytic small subunit. The protein is Anamorsin homolog of Drosophila virilis (Fruit fly).